We begin with the raw amino-acid sequence, 553 residues long: Salicylyl-CoA synthase / salicylate adenylyltransferase (553 aa).

Gly-203 is an ATP binding site. A substrate-binding site is contributed by 246–247; that stretch reads HN. 5 residues coordinate ATP: Gly-320, Val-342, Asp-426, Arg-441, and Lys-533. Lys-533 is a substrate binding site.

The protein belongs to the ATP-dependent AMP-binding enzyme family.

The catalysed reaction is salicylate + ATP + CoA = 2-hydroxybenzoyl-CoA + AMP + diphosphate. In terms of biological role, involved in the degradation of salicylate via a pathway involving coenzyme A derivative. Catalyzes the conversion of salicylate to salicyloyl-CoA via the formation of a salicylate-adenylate intermediate. The substrate specificity is strong, since benzoate, 3-hydroxybenzoate, 4-hydroxybenzoate, gentisate, 2-aminobenzoate, aminobenzoate, salicylamide, salicylaldoxime and 2-hydroxyphenyl acetate cannot substitute for salicylate. The sequence is that of Salicylyl-CoA synthase / salicylate adenylyltransferase from Streptomyces sp.